The following is a 203-amino-acid chain: MSRYRGPRFKKIRRLGSLPGLTSKRPRSGSDLRNQSRSGKRSQYRIRLEEKQKLRFHYGLTERQLLRYVRIAGKAKGSTGQVLLQLLEMRLDNILFRLGMASTIPGARQLVNHRHILVNGRLVDIPSYRCKPRDIITTRDEHRSRALIQNSIDSSQKEELPKHLTLHSLQYQYKGLVNQIIDSKWVGLKINELLVVEYYSRQT.

The disordered stretch occupies residues 15-43; it reads LGSLPGLTSKRPRSGSDLRNQSRSGKRSQ. Residues 89-169 enclose the S4 RNA-binding domain; it reads MRLDNILFRL…LPKHLTLHSL (81 aa).

This sequence belongs to the universal ribosomal protein uS4 family. Part of the 30S ribosomal subunit. Contacts protein S5. The interaction surface between S4 and S5 is involved in control of translational fidelity.

It localises to the plastid. The protein localises to the chloroplast. In terms of biological role, one of the primary rRNA binding proteins, it binds directly to 16S rRNA where it nucleates assembly of the body of the 30S subunit. With S5 and S12 plays an important role in translational accuracy. The protein is Small ribosomal subunit protein uS4c (rps4) of Illicium oligandrum (Star anise).